The sequence spans 184 residues: Photosystem I assembly protein Ycf4 (184 aa).

2 helical membrane-spanning segments follow: residues 22–42 (FFWA…GTSS) and 57–77 (ISFF…LFIS).

This sequence belongs to the Ycf4 family.

It is found in the plastid. The protein resides in the chloroplast thylakoid membrane. Functionally, seems to be required for the assembly of the photosystem I complex. The chain is Photosystem I assembly protein Ycf4 from Lemna minor (Common duckweed).